Reading from the N-terminus, the 275-residue chain is Trans-aconitate 2-methyltransferase (275 aa).

It belongs to the methyltransferase superfamily. Tam family.

It localises to the cytoplasm. The enzyme catalyses trans-aconitate + S-adenosyl-L-methionine = (E)-3-(methoxycarbonyl)pent-2-enedioate + S-adenosyl-L-homocysteine. Catalyzes the S-adenosylmethionine monomethyl esterification of trans-aconitate. The chain is Trans-aconitate 2-methyltransferase from Pseudomonas aeruginosa (strain UCBPP-PA14).